A 648-amino-acid chain; its full sequence is MFRSCVPKAITSSRCFARMYSKDVRFGSGVRAMMIRGVDILADAVAVTMGPKGRSVIVERPWTSPKITKDGFTVARSIALKDQHMNLGAKLVQDVADNTNESAGDGTTTATVLARAIAKEGFNQITMGANPVEIRRGVMLAVDVVKDKLKEMSKAVETREEIQQVATLSANGDTEIGRLIGEATDKVGPRGTITVKDGKRLKDELNIIQGLRFDNGYVSPFFVNSSKGSKVEFANALVMISLKKITGLSQIVKGLEQSLRQRRPLIIIAEDISGEALNALVLNKLRLGLQVCAVKSPSYGHHRKELIGDISAATGATIFGDDINYSKMEEAKLEDLGQVGEAVISKDSTMLLQGKPKTGLLEMRIQQIQDELAEKQIKPEQRDRLRQRLSALTKGVAVLHIGGGSEVEVNEKKDRVVDALNATRAAIEEGIVPGGGTAFLRCIPYLQELKTESADLQKGVDIVCNALRMPCQTIAQNAGVDGPMVVAKVLNGSEDYGYDAMGDEYCRLVEKGIIDPTKVLRTAITDAAGVASLLSTTEVVITDSRNDDLLSKLSGAGGGMDDGLDMNMGGLEELAALSGLGGMGGMGGMGGMGGMGGMGGGFGGMGAGGGMSASASNDGPTAEEMNEMVKAIPGMEQVEVRDIDSGMM.

Residues 1–55 constitute a mitochondrion transit peptide; that stretch reads MFRSCVPKAITSSRCFARMYSKDVRFGSGVRAMMIRGVDILADAVAVTMGPKGRS.

This sequence belongs to the chaperonin (HSP60) family.

Its subcellular location is the mitochondrion matrix. Prevents misfolding and promotes the refolding and proper assembly of unfolded polypeptides generated under stress conditions. This is 60 kDa heat shock protein homolog 1, mitochondrial (Hsp60B) from Drosophila melanogaster (Fruit fly).